Reading from the N-terminus, the 132-residue chain is L-ectoine synthase (132 aa).

The protein belongs to the ectoine synthase family.

The enzyme catalyses (2S)-4-acetamido-2-aminobutanoate = L-ectoine + H2O. It functions in the pathway amine and polyamine biosynthesis; ectoine biosynthesis; L-ectoine from L-aspartate 4-semialdehyde: step 3/3. Functionally, catalyzes the circularization of gamma-N-acetyl-alpha,gamma-diaminobutyric acid (ADABA) to ectoine (1,4,5,6-tetrahydro-2-methyl-4-pyrimidine carboxylic acid), which is an excellent osmoprotectant. The polypeptide is L-ectoine synthase (Alkalilimnicola ehrlichii (strain ATCC BAA-1101 / DSM 17681 / MLHE-1)).